Here is a 147-residue protein sequence, read N- to C-terminus: Large ribosomal subunit protein bL9 (147 aa).

The protein belongs to the bacterial ribosomal protein bL9 family.

Functionally, binds to the 23S rRNA. The chain is Large ribosomal subunit protein bL9 from Clostridium botulinum (strain ATCC 19397 / Type A).